The sequence spans 491 residues: Ribulose-1,5 bisphosphate carboxylase/oxygenase large subunit N-methyltransferase, chloroplastic (491 aa).

In terms of domain architecture, SET spans 67–291 (EGVVTTKTPV…AGDQLFIQYD (225 aa)).

The protein belongs to the class V-like SAM-binding methyltransferase superfamily. Plant protein-lysine LSMT methyltransferase family.

It is found in the plastid. Its subcellular location is the chloroplast. The catalysed reaction is L-lysyl-[ribulose-1,5-bisphosphate carboxylase] + 3 S-adenosyl-L-methionine = N(6),N(6),N(6)-trimethyl-L-lysyl-[ribulose-1,5-bisphosphate carboxylase] + 3 S-adenosyl-L-homocysteine + 3 H(+). Functionally, methylates 'Lys-14' of the large subunit of RuBisCO. This is Ribulose-1,5 bisphosphate carboxylase/oxygenase large subunit N-methyltransferase, chloroplastic (RBCMT) from Nicotiana tabacum (Common tobacco).